The following is a 116-amino-acid chain: uncharacterized protein (116 aa).

2 helical membrane-spanning segments follow: residues 55-77 and 87-109; these read LSYS…LYSF and FSYG…YAAL.

The protein localises to the membrane. This is an uncharacterized protein from Saccharomyces cerevisiae (strain ATCC 204508 / S288c) (Baker's yeast).